The following is a 486-amino-acid chain: Vanillin dehydrogenase (486 aa).

NAD(+)-binding positions include 210–211 (GP), 230–231 (GS), and 252–254 (ELG). The active-site Proton acceptor is E252. C286 functions as the Nucleophile in the catalytic mechanism. 380–382 (EVF) contributes to the NAD(+) binding site.

This sequence belongs to the aldehyde dehydrogenase family.

It carries out the reaction vanillin + NAD(+) + H2O = vanillate + NADH + 2 H(+). Functionally, catalyzes NAD(+)-dependent oxidation of vanillin to vanillate. Also oxidizes other aromatic aldehydes including benzaldehyde, coniferyl aldehyde and cinnamaldehyde, but has a preference for vanillin. Not active with NADP(+). Involved in the degradation pathway of lignin-derived aromatic compounds of plant cell walls. Catalyzes the conversion of vanillin to vanillate due to toxicity of vanillin to the cells. The polypeptide is Vanillin dehydrogenase (Amycolatopsis sp. (strain ATCC 39116 / 75iv2)).